A 335-amino-acid chain; its full sequence is DNA polymerase beta (335 aa).

Residue K41 forms a Glycyl lysine isopeptide (Lys-Gly) (interchain with G-Cter in ubiquitin) linkage. Residue K60 participates in K(+) binding. K60 serves as a coordination point for Na(+). K61 is covalently cross-linked (Glycyl lysine isopeptide (Lys-Gly) (interchain with G-Cter in ubiquitin)). Residues L62 and V65 each contribute to the K(+) site. L62 and V65 together coordinate Na(+). K72 serves as the catalytic Nucleophile; Schiff-base intermediate with DNA; for 5'-dRP lyase activity. K72 is modified (N6-acetyllysine). K81 participates in a covalent cross-link: Glycyl lysine isopeptide (Lys-Gly) (interchain with G-Cter in ubiquitin). The residue at position 83 (R83) is an Omega-N-methylarginine; by PRMT6. Positions 101, 103, and 106 each coordinate K(+). Residues T101, V103, and I106 each coordinate Na(+). R149 provides a ligand contact to a 2'-deoxyribonucleoside 5'-triphosphate. Omega-N-methylarginine; by PRMT6 is present on R152. A 2'-deoxyribonucleoside 5'-triphosphate-binding residues include S180, R183, G189, and D190. Residues 183–192 (RGAESSGDMD) are DNA-binding. Mg(2+) is bound by residues D190, D192, and D256.

It belongs to the DNA polymerase type-X family. In terms of assembly, monomer. Binds single-stranded DNA (ssDNA). Interacts with APEX1, LIG1, LIG3, FEN1, PCNA and XRCC1. Interacts with HUWE1/ARF-BP1, STUB1/CHIP and USP47. Interacts with FAM168A. Mg(2+) serves as cofactor. Methylation by PRMT6 stimulates the polymerase activity by enhancing DNA binding and processivity. Post-translationally, ubiquitinated at Lys-41, Lys-61 and Lys-81: monoubiquitinated by HUWE1/ARF-BP1. Monoubiquitinated protein is then the target of STUB1/CHIP, which catalyzes polyubiquitination from monoubiquitin, leading to degradation by the proteasome. USP47 mediates the deubiquitination of monoubiquitinated protein, preventing polyubiquitination by STUB1/CHIP and its subsequent degradation.

It is found in the nucleus. It localises to the cytoplasm. The catalysed reaction is DNA(n) + a 2'-deoxyribonucleoside 5'-triphosphate = DNA(n+1) + diphosphate. The enzyme catalyses a 5'-end 2'-deoxyribose-2'-deoxyribonucleotide-DNA = (2E,4S)-4-hydroxypenten-2-al-5-phosphate + a 5'-end 5'-phospho-2'-deoxyribonucleoside-DNA + H(+). It carries out the reaction 2'-deoxyribonucleotide-(2'-deoxyribose 5'-phosphate)-2'-deoxyribonucleotide-DNA = a 3'-end 2'-deoxyribonucleotide-(2,3-dehydro-2,3-deoxyribose 5'-phosphate)-DNA + a 5'-end 5'-phospho-2'-deoxyribonucleoside-DNA + H(+). In terms of biological role, repair polymerase that plays a key role in base-excision repair. During this process, the damaged base is excised by specific DNA glycosylases, the DNA backbone is nicked at the abasic site by an apurinic/apyrimidic (AP) endonuclease, and POLB removes 5'-deoxyribose-phosphate from the preincised AP site acting as a 5'-deoxyribose-phosphate lyase (5'-dRP lyase); through its DNA polymerase activity, it adds one nucleotide to the 3' end of the arising single-nucleotide gap. Conducts 'gap-filling' DNA synthesis in a stepwise distributive fashion rather than in a processive fashion as for other DNA polymerases. It is also able to cleave sugar-phosphate bonds 3' to an intact AP site, acting as an AP lyase. This is DNA polymerase beta (Polb) from Rattus norvegicus (Rat).